The following is a 134-amino-acid chain: Putative membrane protein insertion efficiency factor (134 aa).

It belongs to the UPF0161 family.

It localises to the cell inner membrane. Could be involved in insertion of integral membrane proteins into the membrane. The protein is Putative membrane protein insertion efficiency factor of Rhizobium etli (strain ATCC 51251 / DSM 11541 / JCM 21823 / NBRC 15573 / CFN 42).